Here is a 361-residue protein sequence, read N- to C-terminus: MKRERSNILNLRMDELKEALAAINEPQWRAAQLHQWLFSHRAGSFDDMTTLSLPLRRKLAESFYIQQPVTEKHDETMEGSPAGATEKLLIQLPDGERVETVLIPGPNRMTACVSAQAGCLLGCSFCATGQMGFRRNLSSGEITGQVWALSDMLQERNREASISNIVFMGMGEPLLNTANVIEAVLNLSTRKYRFSTSQRKITISTVGITPEIDRLADTGLKTKLAVSLHSAIQEKREALMPQAARQYPLDRLRESLIGYASKTGEPVTLAYMLLKGINDSEMDAKRLIRYASGFFCKINLIDYNPIVNIKFEPVCDGTRERFRDILQDAGLQVTIRKSYGTPINAACGQLAADCTGNSDNL.

E99 (proton acceptor) is an active-site residue. A Radical SAM core domain is found at 105-342 (GPNRMTACVS…VTIRKSYGTP (238 aa)). A disulfide bond links C112 and C347. [4Fe-4S] cluster is bound by residues C119, C123, and C126. Residues 171 to 172 (GE), S204, 227 to 229 (SLH), and N304 each bind S-adenosyl-L-methionine. The active-site S-methylcysteine intermediate is the C347.

This sequence belongs to the radical SAM superfamily. RlmN family. It depends on [4Fe-4S] cluster as a cofactor.

The protein localises to the cytoplasm. It carries out the reaction adenosine(2503) in 23S rRNA + 2 reduced [2Fe-2S]-[ferredoxin] + 2 S-adenosyl-L-methionine = 2-methyladenosine(2503) in 23S rRNA + 5'-deoxyadenosine + L-methionine + 2 oxidized [2Fe-2S]-[ferredoxin] + S-adenosyl-L-homocysteine. The enzyme catalyses adenosine(37) in tRNA + 2 reduced [2Fe-2S]-[ferredoxin] + 2 S-adenosyl-L-methionine = 2-methyladenosine(37) in tRNA + 5'-deoxyadenosine + L-methionine + 2 oxidized [2Fe-2S]-[ferredoxin] + S-adenosyl-L-homocysteine. Functionally, specifically methylates position 2 of adenine 2503 in 23S rRNA and position 2 of adenine 37 in tRNAs. This chain is Probable dual-specificity RNA methyltransferase RlmN, found in Chlorobium luteolum (strain DSM 273 / BCRC 81028 / 2530) (Pelodictyon luteolum).